Consider the following 179-residue polypeptide: CASP-like protein 1F1 (179 aa).

Residues 1-16 (MENVEDKYNSPLKSQK) lie on the Cytoplasmic side of the membrane. The chain crosses the membrane as a helical span at residues 17-37 (LFIGAQICLRIVTIGATLAAT). Residues 38–65 (WIMVTDKQSITFGDFVMVAKYNYSSAFK) lie on the Extracellular side of the membrane. The N-linked (GlcNAc...) asparagine glycan is linked to Asn59. The helical transmembrane segment at 66–86 (FFVLANVIACACSVVSLLFLC) threads the bilayer. At 87–105 (ALGRYSSNPGHVFLLFLHD) the chain is on the cytoplasmic side. The chain crosses the membrane as a helical span at residues 106–126 (LLMMSLVLAGCSAATAIGFLG). Residues 127–150 (KYGNTKSGWMPICDQFGQFCNRGT) lie on the Extracellular side of the membrane. Residues 151–171 (ISMMLSYLSMVCLLILTVTSA) traverse the membrane as a helical segment. The Cytoplasmic portion of the chain corresponds to 172-179 (NKSRQIHV).

The protein belongs to the Casparian strip membrane proteins (CASP) family. As to quaternary structure, homodimer and heterodimers.

Its subcellular location is the cell membrane. The protein is CASP-like protein 1F1 of Ricinus communis (Castor bean).